We begin with the raw amino-acid sequence, 326 residues long: tRNA dimethylallyltransferase (326 aa).

18 to 25 (GPTASGKS) contributes to the ATP binding site. 20–25 (TASGKS) lines the substrate pocket. Interaction with substrate tRNA stretches follow at residues 43–46 (DSMQ) and 167–171 (QRIAR).

The protein belongs to the IPP transferase family. Monomer. Mg(2+) is required as a cofactor.

The enzyme catalyses adenosine(37) in tRNA + dimethylallyl diphosphate = N(6)-dimethylallyladenosine(37) in tRNA + diphosphate. Its function is as follows. Catalyzes the transfer of a dimethylallyl group onto the adenine at position 37 in tRNAs that read codons beginning with uridine, leading to the formation of N6-(dimethylallyl)adenosine (i(6)A). The chain is tRNA dimethylallyltransferase from Rhodospirillum rubrum (strain ATCC 11170 / ATH 1.1.1 / DSM 467 / LMG 4362 / NCIMB 8255 / S1).